The sequence spans 312 residues: Aquaporin-6 (312 aa).

Over 1–50 (MDDKFDDDALPNSKTTAKDYEDKLPEYDYTTTFPNTWMRLREPFREYFAE) the chain is Cytoplasmic. A helical transmembrane segment spans residues 51-71 (FVGVAVLIIFGVGADCQVVLS). The Extracellular portion of the chain corresponds to 72-89 (ANTGVASSPKGSYLSLNC). Residues 90 to 110 (GWAIGTAMGVWISGGISGGHI) form a helical membrane-spanning segment. The NPA 1 signature appears at 111-113 (NPA). The Cytoplasmic portion of the chain corresponds to 111–128 (NPAVTLAMATWRGFPWWK). A helical transmembrane segment spans residues 129 to 149 (VPGFIFAQLLGGIVGAGLVYV). Topologically, residues 150–183 (NYIHAIDIVEGGRHIRTLDTAGLFATYAADYMTN) are extracellular. The N-linked (GlcNAc...) asparagine glycan is linked to N183. The chain crosses the membrane as a helical span at residues 184–204 (LSCFFSEFLATAVLIIVIHAM). Over 205-213 (NDKRNTPPP) the chain is Cytoplasmic. The helical transmembrane segment at 214-234 (AGIVPFVLFFLILGIGASLGM) threads the bilayer. The Extracellular segment spans residues 235–267 (ETGYAINPARDLGPRMLTAMVGYGRQVFAFRNQ). The NPA 2 motif lies at 241-243 (NPA). A helical transmembrane segment spans residues 268–288 (YWIWCPVLAPFLGAQVGTIFY). Residues 289–312 (DLFFYKGQDNVFGRLGSHIHISPA) lie on the Cytoplasmic side of the membrane.

Belongs to the MIP/aquaporin (TC 1.A.8) family.

The protein resides in the membrane. The enzyme catalyses H2O(in) = H2O(out). Its function is as follows. Water channel required to facilitate the transport of water across membranes. Does not mediate the transport carbon dioxide nor nitric oxide across the membrane. Plays a key role in root water transport of mycorrhizal plant such ectomycorrhizal white spruce or trembling aspen via the hydration at the hyphal-root interphase. Contributes in fungal cellular processes during the basidiocarp formation. The chain is Aquaporin-6 from Laccaria bicolor (Bicoloured deceiver).